The sequence spans 630 residues: Sorting nexin-4 (630 aa).

Composition is skewed to polar residues over residues Met1 to Gln11 and Asn19 to Thr28. The tract at residues Met1–Ile143 is disordered. Positions Lys32–Gly49 are enriched in basic residues. Positions Asn50–Thr60 are enriched in low complexity. Residues Asp81 to Asn94 show a composition bias toward basic and acidic residues. Over residues Gln130 to Ile143 the composition is skewed to low complexity. One can recognise a PX domain in the interval Ser187–Trp321. Positions 243, 269, and 288 each coordinate a 1,2-diacyl-sn-glycero-3-phospho-(1D-myo-inositol-3-phosphate). Coiled coils occupy residues Ser361–Ile413 and Thr550–Glu581.

The protein belongs to the sorting nexin family.

It localises to the cytoplasm. It is found in the cytosol. Its subcellular location is the preautophagosomal structure membrane. The protein localises to the endosome membrane. Functionally, sorting nexin, involved in the separation or division of vacuoles throughout the entire life cycle of the cells. Involved in retrieval of late-Golgi SNAREs from post-Golgi endosomes to the trans-Golgi network, for cytoplasm to vacuole transport (Cvt), and autophagy of large cargos including mitophagy, pexophagy and glycophagy. The chain is Sorting nexin-4 (SNX4) from Candida albicans (strain SC5314 / ATCC MYA-2876) (Yeast).